Reading from the N-terminus, the 125-residue chain is Large ribosomal subunit protein bL12 (125 aa).

Belongs to the bacterial ribosomal protein bL12 family. As to quaternary structure, homodimer. Part of the ribosomal stalk of the 50S ribosomal subunit. Forms a multimeric L10(L12)X complex, where L10 forms an elongated spine to which 2 to 4 L12 dimers bind in a sequential fashion. Binds GTP-bound translation factors.

Its function is as follows. Forms part of the ribosomal stalk which helps the ribosome interact with GTP-bound translation factors. Is thus essential for accurate translation. In Rickettsia felis (strain ATCC VR-1525 / URRWXCal2) (Rickettsia azadi), this protein is Large ribosomal subunit protein bL12.